Here is a 315-residue protein sequence, read N- to C-terminus: Long form salivary protein D7L2 (315 aa).

Residues 1-18 form the signal peptide; sequence MIVAPVVLSIFLQLFVQA. 4 disulfide bridges follow: cysteine 37–cysteine 73, cysteine 69–cysteine 128, cysteine 178–cysteine 211, and cysteine 252–cysteine 263.

This sequence belongs to the PBP/GOBP family. In terms of assembly, interacts with host coagulation factor XII/F12 (inactive and activated). Interacts with host coagulation factor XI/F11 (inactive).

It localises to the secreted. In terms of biological role, modulates blood feeding of female mosquitoes on vertebrate species by binding and sequestering different mediators involved in the host response. Binds leukotriene B4 and leukotriene D4. Exhibits anticoagulant activity targeting the intrinsic coagulation pathway; binds coagulation factors XII and XI, preventing generation of activated FXIIa and FXIa. In Anopheles gambiae (African malaria mosquito), this protein is Long form salivary protein D7L2.